The chain runs to 120 residues: Probable early E4 13 kDa protein (120 aa).

This chain is Probable early E4 13 kDa protein, found in Human adenovirus A serotype 12 (HAdV-12).